The primary structure comprises 264 residues: 1-acyl-sn-glycerol-3-phosphate acyltransferase (264 aa).

A helical membrane pass occupies residues 16–36 (MFYTYLRGLVVLLLWSINGNA). Residues 57–62 (HRTWWD) carry the HXXXXD motif motif. The helical transmembrane segment at 233–253 (LILAIILAILTIIFSFIASFI) threads the bilayer.

Belongs to the 1-acyl-sn-glycerol-3-phosphate acyltransferase family.

It is found in the membrane. It catalyses the reaction a fatty acyl-[ACP] + a 1-acyl-sn-glycero-3-phosphate = a 1,2-diacyl-sn-glycero-3-phosphate + holo-[ACP]. The catalysed reaction is hexadecanoyl-[ACP] + 1-hexadecanoyl-sn-glycero-3-phosphate = 1,2-dihexadecanoyl-sn-glycero-3-phosphate + holo-[ACP]. The protein operates within lipid metabolism; phospholipid metabolism. Functionally, converts lysophosphatidic acid (LPA) into phosphatidic acid (PA) by incorporating an acyl moiety at the 2 position. This enzyme utilizes acyl-ACP as fatty acyl donor, but not acyl-CoA. In Streptococcus pneumoniae (strain ATCC BAA-255 / R6), this protein is 1-acyl-sn-glycerol-3-phosphate acyltransferase (plsC).